Here is a 398-residue protein sequence, read N- to C-terminus: F-box/kelch-repeat protein At1g30090 (398 aa).

The F-box domain maps to 51 to 98 (EPLIPGLPDDVALNCLLRVPVQSHVSSKSVCKRWHLLFGTKETFFAKR). 5 Kelch repeats span residues 106-152 (PWLF…FRSV), 159-207 (TMFV…VIDG), 209-255 (IYAA…VLNG), 257-304 (LLVT…IYDR), and 305-346 (LFIV…AVNC).

In Arabidopsis thaliana (Mouse-ear cress), this protein is F-box/kelch-repeat protein At1g30090.